A 295-amino-acid polypeptide reads, in one-letter code: Mediator of RNA polymerase II transcription subunit 6 (295 aa).

A disordered region spans residues 211 to 243 (TATAATNGNNAGGGSNKSSVRPTGGANMATVPS). S225 is subject to Phosphoserine.

The protein belongs to the Mediator complex subunit 6 family. Component of the Mediator complex, which is composed of at least 21 subunits that form three structurally distinct submodules. The Mediator head module contains MED6, MED8, MED11, SRB4/MED17, SRB5/MED18, ROX3/MED19, SRB2/MED20 and SRB6/MED22, the middle module contains MED1, MED4, NUT1/MED5, MED7, CSE2/MED9, NUT2/MED10, SRB7/MED21 and SOH1/MED31, and the tail module contains MED2, PGD1/MED3, RGR1/MED14, GAL11/MED15 and SIN4/MED16. The head and the middle modules interact directly with RNA polymerase II, whereas the elongated tail module interacts with gene-specific regulatory proteins. MED6 interacts directly with SRB4/MED17 and SRB7/MED21.

It localises to the nucleus. In terms of biological role, component of the Mediator complex, a coactivator involved in the regulated transcription of nearly all RNA polymerase II-dependent genes. Mediator functions as a bridge to convey information from gene-specific regulatory proteins to the basal RNA polymerase II transcription machinery. The Mediator complex, having a compact conformation in its free form, is recruited to promoters by direct interactions with regulatory proteins and serves for the assembly of a functional preinitiation complex with RNA polymerase II and the general transcription factors. The Mediator complex unfolds to an extended conformation and partially surrounds RNA polymerase II, specifically interacting with the unphosphorylated form of the C-terminal domain (CTD) of RNA polymerase II. The Mediator complex dissociates from the RNA polymerase II holoenzyme and stays at the promoter when transcriptional elongation begins. The polypeptide is Mediator of RNA polymerase II transcription subunit 6 (MED6) (Saccharomyces cerevisiae (strain ATCC 204508 / S288c) (Baker's yeast)).